A 798-amino-acid chain; its full sequence is Cold shock domain-containing protein E1 (798 aa).

N-acetylmethionine is present on methionine 1. The region spanning 26-87 (ETGVIEKLLT…RTGKPIAVKL (62 aa)) is the CSD 1 domain. Lysine 81 carries the post-translational modification N6-acetyllysine. Lysine 91 participates in a covalent cross-link: Glycyl lysine isopeptide (Lys-Gly) (interchain with G-Cter in SUMO2). Phosphoserine is present on serine 123. The 44-residue stretch at 136–179 (VFYLTYTPEDVEGNVQLETGDKINFVIDNNKHTGAVSARNIMLL) folds into the CSD 2; truncated domain. The CSD 3 domain occupies 186-245 (CQGVVCAMKEAFGFIERGDVVKEIFFHYSEFKGDLETLQPGDDVEFTIKDRNGKEVATDV). Serine 276 carries the phosphoserine modification. One can recognise a CSD 4; truncated domain in the interval 297-337 (LPFGDKDTKSKVTLLEGDHVRFNISTDRRDKLERATNIEVL). 2 consecutive CSD domains span residues 349–410 (EMGV…AIRI) and 447–507 (NKGK…ATCV). At serine 514 the chain carries Phosphoserine. The CSD 7 domain occupies 519–579 (LLGYVATLKD…KGNKVSAEKV (61 aa)). The residue at position 584 (serine 584) is a Phosphoserine. CSD domains are found at residues 610–670 (PTQT…AYNI) and 674–735 (RRAT…ACNV). Positions 748–789 (PRPDRLVNRLKNITLDDASAPRLMVLRQPRGPDNSMGFGAER) constitute an SUZ-C domain. Threonine 761 carries the phosphothreonine modification.

It belongs to the UNR family. In terms of assembly, component of a multi subunit autoregulatory ribonucleoprotein complex (ARC), at least composed of IGF2BP1, PABPC1 and CSDE1. Interacts with STRAP. Part of a complex associated with the FOS mCRD domain and consisting of PABPC1, PAIP1, HNRPD and SYNCRIP. The interaction with PABPC1 is direct and RNA-independent. Interacts with EIF4ENIF1/4E-T.

The protein localises to the cytoplasm. It is found in the stress granule. Its subcellular location is the P-body. RNA-binding protein involved in translationally coupled mRNA turnover. Implicated with other RNA-binding proteins in the cytoplasmic deadenylation/translational and decay interplay of the FOS mRNA mediated by the major coding-region determinant of instability (mCRD) domain. Required for efficient formation of stress granules. Its function is as follows. (Microbial infection) Required for internal initiation of translation of human rhinovirus RNA. In Homo sapiens (Human), this protein is Cold shock domain-containing protein E1.